We begin with the raw amino-acid sequence, 342 residues long: Holliday junction branch migration complex subunit RuvB (342 aa).

The interval 1–185 (MTVKPLRDVT…FPIQERLEYY (185 aa)) is large ATPase domain (RuvB-L). Residues L24, R25, G66, K69, T70, S71, 132-134 (EDY), R175, Y185, and R222 contribute to the ATP site. T70 is a binding site for Mg(2+). The segment at 186-256 (GPAELKEIAV…VVDRTLRRLE (71 aa)) is small ATPAse domain (RuvB-S). Residues 259-342 (ARGLDAMDRR…RPGGKQGSLV (84 aa)) are head domain (RuvB-H). DNA is bound by residues R314 and R319.

The protein belongs to the RuvB family. In terms of assembly, homohexamer. Forms an RuvA(8)-RuvB(12)-Holliday junction (HJ) complex. HJ DNA is sandwiched between 2 RuvA tetramers; dsDNA enters through RuvA and exits via RuvB. An RuvB hexamer assembles on each DNA strand where it exits the tetramer. Each RuvB hexamer is contacted by two RuvA subunits (via domain III) on 2 adjacent RuvB subunits; this complex drives branch migration. In the full resolvosome a probable DNA-RuvA(4)-RuvB(12)-RuvC(2) complex forms which resolves the HJ.

It localises to the cytoplasm. The catalysed reaction is ATP + H2O = ADP + phosphate + H(+). The RuvA-RuvB-RuvC complex processes Holliday junction (HJ) DNA during genetic recombination and DNA repair, while the RuvA-RuvB complex plays an important role in the rescue of blocked DNA replication forks via replication fork reversal (RFR). RuvA specifically binds to HJ cruciform DNA, conferring on it an open structure. The RuvB hexamer acts as an ATP-dependent pump, pulling dsDNA into and through the RuvAB complex. RuvB forms 2 homohexamers on either side of HJ DNA bound by 1 or 2 RuvA tetramers; 4 subunits per hexamer contact DNA at a time. Coordinated motions by a converter formed by DNA-disengaged RuvB subunits stimulates ATP hydrolysis and nucleotide exchange. Immobilization of the converter enables RuvB to convert the ATP-contained energy into a lever motion, pulling 2 nucleotides of DNA out of the RuvA tetramer per ATP hydrolyzed, thus driving DNA branch migration. The RuvB motors rotate together with the DNA substrate, which together with the progressing nucleotide cycle form the mechanistic basis for DNA recombination by continuous HJ branch migration. Branch migration allows RuvC to scan DNA until it finds its consensus sequence, where it cleaves and resolves cruciform DNA. In Anaeromyxobacter sp. (strain K), this protein is Holliday junction branch migration complex subunit RuvB.